A 476-amino-acid chain; its full sequence is Bifunctional protein HldE (476 aa).

The interval 1–319 is ribokinase; that stretch reads MKVTLPAFEK…GALASHQGES (319 aa). 195–198 provides a ligand contact to ATP; that stretch reads NMSE. Residue Asp264 is part of the active site. The tract at residues 345 to 476 is cytidylyltransferase; it reads MTNGCFDILH…SIIQNIMARQ (132 aa).

In the N-terminal section; belongs to the carbohydrate kinase PfkB family. This sequence in the C-terminal section; belongs to the cytidylyltransferase family. As to quaternary structure, homodimer.

It catalyses the reaction D-glycero-beta-D-manno-heptose 7-phosphate + ATP = D-glycero-beta-D-manno-heptose 1,7-bisphosphate + ADP + H(+). The catalysed reaction is D-glycero-beta-D-manno-heptose 1-phosphate + ATP + H(+) = ADP-D-glycero-beta-D-manno-heptose + diphosphate. It participates in nucleotide-sugar biosynthesis; ADP-L-glycero-beta-D-manno-heptose biosynthesis; ADP-L-glycero-beta-D-manno-heptose from D-glycero-beta-D-manno-heptose 7-phosphate: step 1/4. The protein operates within nucleotide-sugar biosynthesis; ADP-L-glycero-beta-D-manno-heptose biosynthesis; ADP-L-glycero-beta-D-manno-heptose from D-glycero-beta-D-manno-heptose 7-phosphate: step 3/4. In terms of biological role, catalyzes the phosphorylation of D-glycero-D-manno-heptose 7-phosphate at the C-1 position to selectively form D-glycero-beta-D-manno-heptose-1,7-bisphosphate. Its function is as follows. Catalyzes the ADP transfer from ATP to D-glycero-beta-D-manno-heptose 1-phosphate, yielding ADP-D-glycero-beta-D-manno-heptose. This is Bifunctional protein HldE from Shewanella denitrificans (strain OS217 / ATCC BAA-1090 / DSM 15013).